The sequence spans 888 residues: Potassium channel AKT6 (888 aa).

Over 1 to 84 the chain is Cytoplasmic; the sequence is MEKKKVWFWG…PFDPRYRAWE (84 aa). The disordered stretch occupies residues 10–31; that stretch reads GVKDDGEGGGGRGGGRTKDAED. A helical membrane pass occupies residues 85–105; sequence TFLVFLVLYTAWASPFEFGFL. Residues 106 to 113 are Extracellular-facing; sequence QKPRPPLS. Residues 114 to 134 traverse the membrane as a helical segment; the sequence is ILDNIVNGFFAVDIVLTFFVA. Topologically, residues 135–155 are cytoplasmic; the sequence is FLDKVTYLLVDDPKRIAWRYA. Residues 156–176 traverse the membrane as a helical segment; sequence STWLIFDVVSTFPYEIFGSLL. Over 177 to 184 the chain is Extracellular; that stretch reads HESIQGYG. A helical; Voltage-sensor membrane pass occupies residues 185-205; it reads IFSMLRLWRLRRVSNCFARLE. Over 206-219 the chain is Cytoplasmic; it reads KDRKYSYFWVRCSK. A helical membrane pass occupies residues 220–240; sequence LLLVTLFVIHCGACFLYSIAA. Over 241-267 the chain is Extracellular; sequence HYPDPSKTFMALTDENWKESPIAVRYN. Residues 268–287 constitute an intramembrane region (pore-forming); that stretch reads TAMYWSITTFSTTGYGDIHG. Residues 288-291 lie on the Extracellular side of the membrane; that stretch reads VNSR. Residues 292–312 form a helical membrane-spanning segment; sequence EMTFILFYMVFNLGLSAYIIG. Residues 313-888 lie on the Cytoplasmic side of the membrane; that stretch reads NMTNLVVHVT…GDFLLLSRDP (576 aa). 398 to 519 contributes to the a nucleoside 3',5'-cyclic phosphate binding site; that stretch reads LFHGISNDLL…IMNNLLQHLK (122 aa). 5 ANK repeats span residues 543–572, 576–605, 609–638, 640–669, and 673–702; these read DLPL…SPNE, DGRT…DPNI, EGNV…KLSL, SVSY…DVTL, and NGTT…DLDW. One can recognise a KHA domain in the interval 822–888; that stretch reads RVTISSPENG…GDFLLLSRDP (67 aa).

It belongs to the potassium channel family. Plant (TC 1.A.1.4) subfamily. In terms of assembly, the potassium channel is probably composed of a homo- or heterotetrameric complex of pore-forming subunits. In terms of tissue distribution, predominantly expressed in flowers; especially in pollen.

It localises to the membrane. Its function is as follows. Highly selective inward-rectifying potassium channel that could mediate potassium uptake in the pollen membrane. Plays an important role in pollen tube development. Assuming opened or closed conformations in response to the voltage difference across the membrane, the channel is activated by hyperpolarization. May interact with the cytoskeleton or with regulatory proteins. This Arabidopsis thaliana (Mouse-ear cress) protein is Potassium channel AKT6 (AKT6).